We begin with the raw amino-acid sequence, 211 residues long: Octanoyltransferase (211 aa).

A BPL/LPL catalytic domain is found at 32 to 207 (PCTYDEIWFV…ELSKFLEIFI (176 aa)). Substrate is bound by residues 71-78 (RGGQITYH), 138-140 (SLG), and 151-153 (GLA). Catalysis depends on Cys169, which acts as the Acyl-thioester intermediate.

The protein belongs to the LipB family.

It is found in the cytoplasm. The enzyme catalyses octanoyl-[ACP] + L-lysyl-[protein] = N(6)-octanoyl-L-lysyl-[protein] + holo-[ACP] + H(+). The protein operates within protein modification; protein lipoylation via endogenous pathway; protein N(6)-(lipoyl)lysine from octanoyl-[acyl-carrier-protein]: step 1/2. In terms of biological role, catalyzes the transfer of endogenously produced octanoic acid from octanoyl-acyl-carrier-protein onto the lipoyl domains of lipoate-dependent enzymes. Lipoyl-ACP can also act as a substrate although octanoyl-ACP is likely to be the physiological substrate. In Buchnera aphidicola subsp. Acyrthosiphon pisum (strain APS) (Acyrthosiphon pisum symbiotic bacterium), this protein is Octanoyltransferase.